Consider the following 269-residue polypeptide: CUE domain-containing protein 2-B (269 aa).

The segment at 110–130 (ASPSEKTATEPLEGAVAQDKD) is disordered. A CUE domain is found at 131 to 174 (DPKTGVDLLLEIFPSCTITQAQTALSMAKGDLEDAVQIIVDGKV).

This sequence belongs to the CUEDC2 family. Phosphorylated.

The protein resides in the cytoplasm. Its subcellular location is the nucleus. May play a role in targeting proteins for ubiquitination and subsequent proteasomal degradation. The polypeptide is CUE domain-containing protein 2-B (cuedc2-b) (Xenopus laevis (African clawed frog)).